A 539-amino-acid chain; its full sequence is CTP synthase (539 aa).

Residues 1–267 (MTKYIFVTGG…DQKVVDFLHI (267 aa)) form an amidoligase domain region. Ser-13 is a binding site for CTP. Ser-13 is a binding site for UTP. 14-19 (SLGKGI) lines the ATP pocket. Tyr-54 contacts L-glutamine. Asp-71 serves as a coordination point for ATP. Asp-71 and Glu-141 together coordinate Mg(2+). CTP-binding positions include 148-150 (DME), 188-193 (KSKPTQ), and Lys-224. UTP is bound by residues 188-193 (KSKPTQ) and Lys-224. The Glutamine amidotransferase type-1 domain occupies 294–537 (KITLVGKYVE…IGAASGLQVD (244 aa)). Residue Gly-356 participates in L-glutamine binding. The active-site Nucleophile; for glutamine hydrolysis is Cys-383. Residues 384–387 (LGMQ), Glu-407, and Arg-465 each bind L-glutamine. Active-site residues include His-510 and Glu-512.

It belongs to the CTP synthase family. As to quaternary structure, homotetramer.

It carries out the reaction UTP + L-glutamine + ATP + H2O = CTP + L-glutamate + ADP + phosphate + 2 H(+). The catalysed reaction is L-glutamine + H2O = L-glutamate + NH4(+). The enzyme catalyses UTP + NH4(+) + ATP = CTP + ADP + phosphate + 2 H(+). It participates in pyrimidine metabolism; CTP biosynthesis via de novo pathway; CTP from UDP: step 2/2. Allosterically activated by GTP, when glutamine is the substrate; GTP has no effect on the reaction when ammonia is the substrate. The allosteric effector GTP functions by stabilizing the protein conformation that binds the tetrahedral intermediate(s) formed during glutamine hydrolysis. Inhibited by the product CTP, via allosteric rather than competitive inhibition. In terms of biological role, catalyzes the ATP-dependent amination of UTP to CTP with either L-glutamine or ammonia as the source of nitrogen. Regulates intracellular CTP levels through interactions with the four ribonucleotide triphosphates. The polypeptide is CTP synthase (Lactobacillus delbrueckii subsp. bulgaricus (strain ATCC BAA-365 / Lb-18)).